The primary structure comprises 67 residues: UPF0181 protein KPK_1966 (67 aa).

A disordered region spans residues 48 to 67; sequence EQIVARFEDEDEDQDEDEDD. Residues 55-67 are compositionally biased toward acidic residues; it reads EDEDEDQDEDEDD.

The protein belongs to the UPF0181 family.

In Klebsiella pneumoniae (strain 342), this protein is UPF0181 protein KPK_1966.